Reading from the N-terminus, the 611-residue chain is tRNA uridine 5-carboxymethylaminomethyl modification enzyme MnmG (611 aa).

Residues 12-17 (GGGHAG), valine 124, and serine 179 each bind FAD. Position 271–285 (271–285 (GPRYCPSVEDKIVRF)) interacts with NAD(+). Glutamine 368 contacts FAD.

It belongs to the MnmG family. As to quaternary structure, homodimer. Heterotetramer of two MnmE and two MnmG subunits. Requires FAD as cofactor.

The protein localises to the cytoplasm. NAD-binding protein involved in the addition of a carboxymethylaminomethyl (cmnm) group at the wobble position (U34) of certain tRNAs, forming tRNA-cmnm(5)s(2)U34. The sequence is that of tRNA uridine 5-carboxymethylaminomethyl modification enzyme MnmG from Mycoplasma mobile (strain ATCC 43663 / 163K / NCTC 11711) (Mesomycoplasma mobile).